A 159-amino-acid polypeptide reads, in one-letter code: uncharacterized protein (159 aa).

Transmembrane regions (helical) follow at residues 17-37, 44-64, and 67-87; these read FFFF…NLSS, WLIV…PLPI, and FSGA…DLIA.

The protein resides in the membrane. This is an uncharacterized protein from Saccharomyces cerevisiae (strain ATCC 204508 / S288c) (Baker's yeast).